The following is a 497-amino-acid chain: 4,4'-diaponeurosporene oxygenase (497 aa).

7–19 (VIGGGLGGISAAI) provides a ligand contact to FAD.

Belongs to the carotenoid/retinoid oxidoreductase family. CrtP subfamily. FAD is required as a cofactor.

The catalysed reaction is all-trans-4,4'-diaponeurosporene + 2 AH2 + 2 O2 = 4,4'-diaponeurosporenal + 2 A + 3 H2O. The protein operates within carotenoid biosynthesis; staphyloxanthin biosynthesis; staphyloxanthin from farnesyl diphosphate: step 3/5. In terms of biological role, involved in the biosynthesis of the yellow-orange carotenoid staphyloxanthin, which plays a role in the virulence via its protective function against oxidative stress. Catalyzes the oxidation of the terminal methyl side group of 4,4'-diaponeurosporene to form 4,4'-diaponeurosporen-4-al. The chain is 4,4'-diaponeurosporene oxygenase from Staphylococcus aureus (strain MRSA252).